A 311-amino-acid polypeptide reads, in one-letter code: Linearmycin resistance ATP-binding protein LnrL (311 aa).

One can recognise an ABC transporter domain in the interval leucine 2–threonine 232. Glycine 34 to serine 41 serves as a coordination point for ATP.

The protein belongs to the ABC transporter superfamily. In terms of assembly, the complex is composed of two ATP-binding proteins (LnrL) and two transmembrane proteins (LnrM and LnrN).

Required for resistance to linearmycins, a family of antibiotic-specialized metabolites produced by some streptomycetes. Part of the ABC transporter complex LnrLMN that probably facilitates linearmycin removal from the membrane. Responsible for energy coupling to the transport system. Also mediates KinC-dependent biofilm morphology. The polypeptide is Linearmycin resistance ATP-binding protein LnrL (Bacillus subtilis (strain 168)).